We begin with the raw amino-acid sequence, 99 residues long: Aspartyl/glutamyl-tRNA(Asn/Gln) amidotransferase subunit C (99 aa).

This sequence belongs to the GatC family. Heterotrimer of A, B and C subunits.

The catalysed reaction is L-glutamyl-tRNA(Gln) + L-glutamine + ATP + H2O = L-glutaminyl-tRNA(Gln) + L-glutamate + ADP + phosphate + H(+). The enzyme catalyses L-aspartyl-tRNA(Asn) + L-glutamine + ATP + H2O = L-asparaginyl-tRNA(Asn) + L-glutamate + ADP + phosphate + 2 H(+). Functionally, allows the formation of correctly charged Asn-tRNA(Asn) or Gln-tRNA(Gln) through the transamidation of misacylated Asp-tRNA(Asn) or Glu-tRNA(Gln) in organisms which lack either or both of asparaginyl-tRNA or glutaminyl-tRNA synthetases. The reaction takes place in the presence of glutamine and ATP through an activated phospho-Asp-tRNA(Asn) or phospho-Glu-tRNA(Gln). This Ralstonia pickettii (strain 12J) protein is Aspartyl/glutamyl-tRNA(Asn/Gln) amidotransferase subunit C.